The primary structure comprises 303 residues: Uricase (303 aa).

A2 bears the N-acetylalanine mark. Residues K10 and K23 each carry the N6-acetyllysine; alternate modification. An N6-succinyllysine; alternate mark is found at K10 and K23. K23 acts as the Charge relay system in catalysis. N6-acetyllysine occurs at positions 27 and 36. S39 and S63 each carry phosphoserine. The Charge relay system role is filled by T68. Urate-binding residues include T68 and D69. N6-acetyllysine occurs at positions 118, 122, and 164. F170 lines the urate pocket. N6-acetyllysine occurs at positions 175 and 185. R187 serves as a coordination point for urate. K220 bears the N6-acetyllysine; alternate mark. The residue at position 220 (K220) is an N6-succinyllysine; alternate. S231 is subject to Phosphoserine. Urate contacts are provided by V234, Q235, and N261. The Charge relay system role is filled by H263. K277 is subject to N6-acetyllysine. Y288 carries the post-translational modification Phosphotyrosine. A Microbody targeting signal motif is present at residues 301-303 (SRL).

This sequence belongs to the uricase family. In terms of tissue distribution, expressed in liver. Not detected in other tissues tested.

It is found in the peroxisome. The catalysed reaction is urate + O2 + H2O = 5-hydroxyisourate + H2O2. Its pathway is purine metabolism; urate degradation; (S)-allantoin from urate: step 1/3. With respect to regulation, competitively inhibited by xanthine. Functionally, catalyzes the oxidation of uric acid to 5-hydroxyisourate, which is further processed to form (S)-allantoin. The protein is Uricase (Uox) of Rattus norvegicus (Rat).